Consider the following 305-residue polypeptide: uncharacterized protein (305 aa).

The ABC transporter domain maps to 5–233 (LELKNVTKNI…ENDTYFFQVE (229 aa)). 37 to 44 (GPNGAGKT) contributes to the ATP binding site.

It belongs to the ABC transporter superfamily.

This is an uncharacterized protein from Bacillus subtilis (strain 168).